The sequence spans 743 residues: Polyribonucleotide nucleotidyltransferase (743 aa).

The Mg(2+) site is built by aspartate 489 and aspartate 495. In terms of domain architecture, KH spans 556-618 (PRIEKMHIGK…PCIDAAIGMI (63 aa)). The 71-residue stretch at 628–698 (GETYPGKITS…KTGKFKLSRK (71 aa)) folds into the S1 motif domain. The interval 704–743 (PEGYVEPQPRERRERREGGREGGRNFERRGGDRDHREPRG) is disordered.

The protein belongs to the polyribonucleotide nucleotidyltransferase family. The cofactor is Mg(2+).

It is found in the cytoplasm. The enzyme catalyses RNA(n+1) + phosphate = RNA(n) + a ribonucleoside 5'-diphosphate. Involved in mRNA degradation. Catalyzes the phosphorolysis of single-stranded polyribonucleotides processively in the 3'- to 5'-direction. In Porphyromonas gingivalis (strain ATCC 33277 / DSM 20709 / CIP 103683 / JCM 12257 / NCTC 11834 / 2561), this protein is Polyribonucleotide nucleotidyltransferase.